A 516-amino-acid polypeptide reads, in one-letter code: MPTDMELSPSNVARHRLAVLAAHLSAASLEPPVMASSLEAHCVSAQTMVAPPELVKGTLTIVDERTGKRYQVQVSEEGTIKATDLKKITTGPNDKGLKLYDPGYLNTAPVRSSISYIDGDLGILRYRGYPIEELAESSTYVEVAYLLMYGNLPSQSQLADWEFAISQHSAVPQGLVDIIQAMPHDAHPMGVLVSAMSALSVFHPDANPALRGQDLYKSKQVRDKQIARIIGKAPTIAAAAYLRLAGRPPVLPSSNLSYSENFLYMLDSLGNRSYKPNPRLARVLDILFILHAEHEMNCSTSAARHLASSGVDVFTALSGAVGALYGPLHGGANEAVLKMLSEIGTVNNIPEFIEGVKNRKRKMSGFGHRVYKNYDPRAKVIRKLAEEVFSIVGRDPLIEVAVALEKAALSDEYFVKRKLYPNVDFYSGLIYRAMGFPPEFFTVLFAIPRMAGYLAHWRESLDDPDTKIIRPQQVYTGEWLRHYIPPNERLVPAKADRLGQVSVSNASKRRLSGSGI.

The N-terminal 43 residues, 1–43, are a transit peptide targeting the glyoxysome; the sequence is MPTDMELSPSNVARHRLAVLAAHLSAASLEPPVMASSLEAHCV. Residues histidine 329, histidine 368, and aspartate 424 contribute to the active site.

It belongs to the citrate synthase family.

The protein resides in the glyoxysome. The enzyme catalyses oxaloacetate + acetyl-CoA + H2O = citrate + CoA + H(+). It participates in carbohydrate metabolism; glyoxylate cycle; isocitrate from oxaloacetate: step 1/2. In Cucurbita maxima (Pumpkin), this protein is Citrate synthase, glyoxysomal.